An 812-amino-acid polypeptide reads, in one-letter code: Mitochondrial intermediate peptidase (812 aa).

The transit peptide at 1–29 (MRLSRQLLRSTPFLTRAKPVSGKVSHFRS) directs the protein to the mitochondrion. A disordered region spans residues 19–49 (PVSGKVSHFRSRTDLKGGSSNSSKSPDSVGD). Residues 37 to 46 (SSNSSKSPDS) are compositionally biased toward low complexity. Residue His595 coordinates Zn(2+). Glu596 is a catalytic residue. Zn(2+)-binding residues include His599 and His602.

Belongs to the peptidase M3 family. Zn(2+) is required as a cofactor.

The protein resides in the mitochondrion matrix. The enzyme catalyses Release of an N-terminal octapeptide as second stage of processing of some proteins imported into the mitochondrion.. Functionally, cleaves proteins, imported into the mitochondrion, to their mature size. While most mitochondrial precursor proteins are processed to the mature form in one step by mitochondrial processing peptidase (MPP), the sequential cleavage by MIP of an octapeptide after initial processing by MPP is a required step for a subgroup of nuclear-encoded precursor proteins destined for the matrix or the inner membrane. The protein is Mitochondrial intermediate peptidase (OCT1) of Scheffersomyces stipitis (strain ATCC 58785 / CBS 6054 / NBRC 10063 / NRRL Y-11545) (Yeast).